The following is a 366-amino-acid chain: MSGNTFGHLFTVTSFGESHGPAIGCVVDGCPPGLAICEADIQRELDRRKPGTSRHVTQRREPDTVEILSGVFEGKTTGTPIALLIRNQDQRSKDYGNIADTFRPGHADYTYWHKYGIRDPRGGGRSSARETAVRVAAGAIAKKWLSERFGIVVRGHLTQIGDIDIPFTSWDLVDTNPFFAADTSRLDELEAYMDSIRKSCDSIGARLRVVAENVPVGWGEPVFDRLDADIAYAMMGINAVKGVEIGAGFGCVTQRGSEHGDELTPEGFVSNHAGGILGGISTGQHIEVSMAIKPTSSIARPRRSIDRQGQPVNMETHGRHDPCVGIRATPIAEAMLALVLIDHALRHRAQCGDVRVETPQIAGRVG.

Residues Arg48 and Arg54 each contribute to the NADP(+) site. Residues 125 to 127 (RSS), 238 to 239 (NA), Gly278, 293 to 297 (KPTSS), and Arg319 each bind FMN.

The protein belongs to the chorismate synthase family. As to quaternary structure, homotetramer. It depends on FMNH2 as a cofactor.

It carries out the reaction 5-O-(1-carboxyvinyl)-3-phosphoshikimate = chorismate + phosphate. It functions in the pathway metabolic intermediate biosynthesis; chorismate biosynthesis; chorismate from D-erythrose 4-phosphate and phosphoenolpyruvate: step 7/7. Its function is as follows. Catalyzes the anti-1,4-elimination of the C-3 phosphate and the C-6 proR hydrogen from 5-enolpyruvylshikimate-3-phosphate (EPSP) to yield chorismate, which is the branch point compound that serves as the starting substrate for the three terminal pathways of aromatic amino acid biosynthesis. This reaction introduces a second double bond into the aromatic ring system. The polypeptide is Chorismate synthase (Laribacter hongkongensis (strain HLHK9)).